Consider the following 628-residue polypeptide: DNA mismatch repair protein MutL (628 aa).

Positions 334 to 367 (SDFAQPSADNMPKPESPGAPAAHGRKDDAPAAHA) are disordered. Positions 357-367 (GRKDDAPAAHA) are enriched in basic and acidic residues.

This sequence belongs to the DNA mismatch repair MutL/HexB family.

Functionally, this protein is involved in the repair of mismatches in DNA. It is required for dam-dependent methyl-directed DNA mismatch repair. May act as a 'molecular matchmaker', a protein that promotes the formation of a stable complex between two or more DNA-binding proteins in an ATP-dependent manner without itself being part of a final effector complex. The chain is DNA mismatch repair protein MutL from Opitutus terrae (strain DSM 11246 / JCM 15787 / PB90-1).